Here is a 382-residue protein sequence, read N- to C-terminus: Cysteine desulfurase IscS 1 (382 aa).

Asparagine 149 is a binding site for pyridoxal 5'-phosphate. Cysteine 321 (cysteine persulfide intermediate) is an active-site residue. Cysteine 321 serves as a coordination point for [2Fe-2S] cluster.

It belongs to the class-V pyridoxal-phosphate-dependent aminotransferase family. NifS/IscS subfamily. As to quaternary structure, homodimer. Forms a heterotetramer with IscU, interacts with other sulfur acceptors. Pyridoxal 5'-phosphate is required as a cofactor.

The protein resides in the cytoplasm. It catalyses the reaction (sulfur carrier)-H + L-cysteine = (sulfur carrier)-SH + L-alanine. The protein operates within cofactor biosynthesis; iron-sulfur cluster biosynthesis. In terms of biological role, master enzyme that delivers sulfur to a number of partners involved in Fe-S cluster assembly, tRNA modification or cofactor biosynthesis. Catalyzes the removal of elemental sulfur atoms from cysteine to produce alanine. Functions as a sulfur delivery protein for Fe-S cluster synthesis onto IscU, an Fe-S scaffold assembly protein, as well as other S acceptor proteins. This is Cysteine desulfurase IscS 1 from Archaeoglobus fulgidus (strain ATCC 49558 / DSM 4304 / JCM 9628 / NBRC 100126 / VC-16).